An 82-amino-acid polypeptide reads, in one-letter code: uncharacterized protein (82 aa).

This is an uncharacterized protein from Archaeoglobus fulgidus (strain ATCC 49558 / DSM 4304 / JCM 9628 / NBRC 100126 / VC-16).